A 308-amino-acid chain; its full sequence is MPMMNTNVGFTRNTCFDDDFRSGRFVVRFEPLIEENAADQGAEIVNQNFLTGDERLLKLLFSSKTNLSHKYTTMKELVMKWNHFRDRFQREIVGRNSRGAALSRAEILQILLDIAQEKTGSTITRAYPRDVSWFFAQLVLGDVDTFVRAVKPAGLITSLTELPGLTTGTVGEGGQNDLYDLVDPSSYICDVHLRRDRSCEGKSIFLIAVPKQDPPLALENFRGLELKVIITDSSLQQVVRQTVADVPIESPRFAVAHLGQCFSRTLAHASFGGWKLYDARLLSRSIEALLPHVPDERPTPLKRIRLLV.

This is an uncharacterized protein from Ictalurid herpesvirus 1 (strain Auburn) (IcHV-1).